A 714-amino-acid polypeptide reads, in one-letter code: MSVSSNDPEQRNGRGMASGNNVDMSLYPPFIKQLDAKLPDYTREGDIEYPFEEITGVGDENRIRGNWSNKSDYLLAVIGFTAGVGSFWKFPFLVFQHGGAAFLVPYLCMLCLASLPMFFMEMVLGQFSSSAAISVWKVVPLFKGIGFAQVTISGFFAVFFNIISAWTLFYLINSFSFSIPWSNCANSWSGENCTLGTRIQCKEMNGTLLVNGSCIVEHASSNETTVIPLHDLGSIPSLKYFHNDVLMLSKGVDDFGTLNWYLGLCVLACWIAVFLCLFQGVKSSGKVVYVAVIVPFIILTVLLTRLLTLDGSLAAVFYFLTPKWEILMDLHVWGEAAVQAFYSVSCCSGGLFTIASYSRFHNNIYKDIWLVLIVDVIVSLVGCLLTFSAIGFTCYEFAISLDKFHIRDGFHLVFVFLAEALAGVSVAPLYAGLFFIMILLVVHATQMFVVETIVSSICDEYPERLRRNRRHVLTTVCALFILLSIPFCLSSGLFWMELLTQFVLTWPLVVIAFLECMAINWVYGVDNMLDNAKWIVGYWPPCYIFWKILFKFICPMVYLAILCFLWLDWNSIQYESYQFPYWSILTAWCIASFPLILIPIVGIWQFCIAKGTITQKWWRVLYPDDAWGPAMAIHRAEKFPLQIPEARRLLLPPEVEIASSRGVLQEEMPMSYDYNTSSAADVRSNRSTGHGATDVRSVAATNNTIPKFERETAI.

A disordered region spans residues 1–21 (MSVSSNDPEQRNGRGMASGNN). Residues 1-74 (MSVSSNDPEQ…GNWSNKSDYL (74 aa)) are Cytoplasmic-facing. 3 consecutive transmembrane segments (helical) span residues 75 to 95 (LAVI…FLVF), 100 to 120 (AAFL…MFFM), and 152 to 172 (ISGF…FYLI). Residues 173–257 (NSFSFSIPWS…LSKGVDDFGT (85 aa)) lie on the Extracellular side of the membrane. Residues N192, N205, N211, and N222 are each glycosylated (N-linked (GlcNAc...) asparagine). A run of 9 helical transmembrane segments spans residues 258 to 278 (LNWY…LCLF), 287 to 307 (VVYV…TRLL), 336 to 356 (AAVQ…TIAS), 368 to 388 (IWLV…LTFS), 422 to 442 (AGVS…LLVV), 476 to 496 (VCAL…LFWM), 502 to 522 (FVLT…INWV), 548 to 568 (ILFK…LWLD), and 584 to 604 (ILTA…VGIW). At 605 to 714 (QFCIAKGTIT…IPKFERETAI (110 aa)) the chain is on the cytoplasmic side.

Belongs to the sodium:neurotransmitter symporter (SNF) (TC 2.A.22) family. As to quaternary structure, interacts with stn-1; part of the DGC. In terms of tissue distribution, body wall, and vulval and enteric muscles.

It is found in the cell membrane. Its subcellular location is the postsynaptic cell membrane. Its function is as follows. Mediates sodium-dependent uptake of acetylcholine at neuromuscular junctions during periods of increased synaptic activity, may also prevent spillover to adjacent synaptic sites. Not involved in the uptake of other neurotransmitters (GABA, glycine, proline and glutamate) and there was also no inhibition of uptake by adding an excess of other candidate substrates (GABA, glycine, taurine, creatine, proline, alanine, carnitine, glutamate and betaine). Required for muscle integrity; altered transport of acetylcholine due to loss of dystrophin-glycoprotein complex (DGC) function results in muscle degeneration. This Caenorhabditis elegans protein is Sodium-dependent acetylcholine transporter.